Here is a 70-residue protein sequence, read N- to C-terminus: PPF2L antigen (70 aa).

The sequence is that of PPF2L antigen from Plasmodium falciparum (isolate Palo Alto / Uganda).